Consider the following 123-residue polypeptide: Small ribosomal subunit protein uS13 (123 aa).

Positions 97-123 (PCRGQRTHTNSRTRKGPRRGVMAKKKK) are disordered.

This sequence belongs to the universal ribosomal protein uS13 family. In terms of assembly, part of the 30S ribosomal subunit. Forms a loose heterodimer with protein S19. Forms two bridges to the 50S subunit in the 70S ribosome.

Functionally, located at the top of the head of the 30S subunit, it contacts several helices of the 16S rRNA. In the 70S ribosome it contacts the 23S rRNA (bridge B1a) and protein L5 of the 50S subunit (bridge B1b), connecting the 2 subunits; these bridges are implicated in subunit movement. Contacts the tRNAs in the A and P-sites. The chain is Small ribosomal subunit protein uS13 from Solidesulfovibrio magneticus (strain ATCC 700980 / DSM 13731 / RS-1) (Desulfovibrio magneticus).